The chain runs to 548 residues: Myrosinase (548 aa).

The first 20 residues, 1–20 (MKLLHGLALVFLLAAASCKA), serve as a signal peptide directing secretion. 3 disulfide bridges follow: Cys26/Cys458, Cys34/Cys454, and Cys226/Cys236. Gln59 is a binding site for substrate. 2 residues coordinate Zn(2+): His76 and Asp90. Asn110 carries an N-linked (GlcNAc...) asparagine glycan. Positions 161 and 206 each coordinate substrate. Residue Gln207 coordinates L-ascorbate. An N-linked (GlcNAc...) asparagine glycan is attached at Asn240. Arg281 contributes to the L-ascorbate binding site. Asn331 carries N-linked (GlcNAc...) asparagine glycosylation. Position 352 (Tyr352) interacts with substrate. The active-site Nucleophile is the Glu429. Substrate contacts are provided by residues Trp477 and 484-485 (EF). N-linked (GlcNAc...) asparagine glycosylation is present at Asn520.

The protein belongs to the glycosyl hydrolase 1 family. As to quaternary structure, homodimer. In vacuoles called myrosin grains of a certain class of cells, myrosin cells, distributed in the cotyledons and the axis of the embryo as well as in different organs of the growing plant.

The protein localises to the vacuole. The catalysed reaction is a thioglucoside + H2O = a sugar + a thiol.. In terms of biological role, degradation of glucosinolates (glucose residue linked by a thioglucoside bound to an amino acid derivative) to glucose, sulfate and any of the products: thiocyanates, isothiocyanates, nitriles, epithionitriles or oxazolidine-2-thiones. This chain is Myrosinase, found in Brassica napus (Rape).